Consider the following 815-residue polypeptide: cGMP-specific 3',5'-cyclic phosphodiesterase delta (815 aa).

Over 1 to 56 the chain is Cytoplasmic; it reads MNEYNNDNMEQEKEKKKEEQKYKNIIKKEYFIFPRLYDKNKEIEYNKLRIHNIKEY. A helical membrane pass occupies residues 57-77; the sequence is ICIHLTISLFIILIECFVFSF. The Extracellular segment spans residues 78-86; it reads NLNIKDTTY. A helical membrane pass occupies residues 87-107; the sequence is VEICVVIFSILNCLMHIVVLI. Residues 108-120 lie on the Cytoplasmic side of the membrane; the sequence is KMYFFTSESVYTK. Residues 121 to 141 form a helical membrane-spanning segment; sequence GVFIGYIVLNQVFQFLSLYFF. At 142–160 the chain is on the extracellular side; the sequence is TKRNEQSKNDIAHLKYYDN. A helical membrane pass occupies residues 161-181; it reads SFNLYVHFFVDSVFILCLPAL. At 182–183 the chain is on the cytoplasmic side; it reads SF. The helical transmembrane segment at 184–204 threads the bilayer; sequence FLSVLFMMMFLCLNILLINMI. The Extracellular portion of the chain corresponds to 205-210; that stretch reads KFNKTN. An N-linked (GlcNAc...) asparagine glycan is attached at asparagine 207. A helical membrane pass occupies residues 211-231; that stretch reads YGSDIYHICLLSVVLLMFLIL. Residues 232-815 lie on the Cytoplasmic side of the membrane; that stretch reads RYMMEERNRL…FKEEIKHGKL (584 aa). In terms of domain architecture, PDEase spans 384–762; that stretch reads YEVEVLKNIK…QTWRLIEKNI (379 aa). Histidine 459 serves as the catalytic Proton donor. A 3',5'-cyclic GMP-binding site is contributed by 459 to 463; it reads HNANH. Residues histidine 463, histidine 499, aspartate 500, and aspartate 616 each coordinate a divalent metal cation. Aspartate 500, aspartate 616, and glutamine 715 together coordinate 3',5'-cyclic GMP.

It belongs to the cyclic nucleotide phosphodiesterase family. It depends on a divalent metal cation as a cofactor.

It is found in the membrane. The enzyme catalyses 3',5'-cyclic GMP + H2O = GMP + H(+). The protein operates within purine metabolism; 3',5'-cyclic GMP degradation; GMP from 3',5'-cyclic GMP: step 1/1. Its function is as follows. Specifically hydrolyzes the second messenger cGMP, which is a key regulator of many important physiological processes. Probably by regulating cGMP levels, required for activation of gametogenesis. The sequence is that of cGMP-specific 3',5'-cyclic phosphodiesterase delta from Plasmodium falciparum (isolate 3D7).